Consider the following 80-residue polypeptide: Small ribosomal subunit protein bS16 (80 aa).

This sequence belongs to the bacterial ribosomal protein bS16 family.

The chain is Small ribosomal subunit protein bS16 from Hydrogenovibrio crunogenus (strain DSM 25203 / XCL-2) (Thiomicrospira crunogena).